Here is a 338-residue protein sequence, read N- to C-terminus: 1-aminocyclopropane-1-carboxylate deaminase (338 aa).

An N6-(pyridoxal phosphate)lysine modification is found at lysine 51. The active-site Nucleophile is serine 78.

It belongs to the ACC deaminase/D-cysteine desulfhydrase family. In terms of assembly, homotrimer. It depends on pyridoxal 5'-phosphate as a cofactor.

The enzyme catalyses 1-aminocyclopropane-1-carboxylate + H2O = 2-oxobutanoate + NH4(+). Functionally, catalyzes a cyclopropane ring-opening reaction, the irreversible conversion of 1-aminocyclopropane-1-carboxylate (ACC) to ammonia and alpha-ketobutyrate. Allows growth on ACC as a nitrogen source. This is 1-aminocyclopropane-1-carboxylate deaminase from Burkholderia cenocepacia (strain ATCC BAA-245 / DSM 16553 / LMG 16656 / NCTC 13227 / J2315 / CF5610) (Burkholderia cepacia (strain J2315)).